The following is a 357-amino-acid chain: IGF-like family receptor 1 (357 aa).

The first 22 residues, 1 to 22 (MGPLRLLPTAVLLLAQAAPWEA), serve as a signal peptide directing secretion. The Extracellular segment spans residues 23–160 (SQHCGRLEYW…HKAPQQAWPS (138 aa)). A disordered region spans residues 100–147 (IPSGSRGGTGRPCREPVPNKEPCPLTPGKSSILSSQEPSSPGIPSVSW). Residues 129–139 (SSILSSQEPSS) show a composition bias toward low complexity. Residues 161-181 (LSFALFLVLVLLVTSAIILLA) form a helical membrane-spanning segment. Residues 182–357 (LQRHHRRLDQ…KLGSSGACLA (176 aa)) lie on the Cytoplasmic side of the membrane.

The protein resides in the cell membrane. Its function is as follows. Probable cell membrane receptor for the IGF-like family protein IGFL. This chain is IGF-like family receptor 1 (IGFLR1), found in Bos taurus (Bovine).